The sequence spans 119 residues: Large ribosomal subunit protein uL18 (119 aa).

This sequence belongs to the universal ribosomal protein uL18 family. As to quaternary structure, part of the 50S ribosomal subunit; part of the 5S rRNA/L5/L18/L25 subcomplex. Contacts the 5S and 23S rRNAs.

In terms of biological role, this is one of the proteins that bind and probably mediate the attachment of the 5S RNA into the large ribosomal subunit, where it forms part of the central protuberance. The sequence is that of Large ribosomal subunit protein uL18 from Lactobacillus delbrueckii subsp. bulgaricus (strain ATCC 11842 / DSM 20081 / BCRC 10696 / JCM 1002 / NBRC 13953 / NCIMB 11778 / NCTC 12712 / WDCM 00102 / Lb 14).